The primary structure comprises 1464 residues: MGARNSVLRGKKADELEKIRLRPSGKKKYRLKHIVWAANELDKFGLAESLLESKEGCQKILTVLDPLVPTGSENLKSLFNTVCVIWCLHAEEKVKDTEEAKKLVQRHLGAETGTAEKMPSTSRPTAPPSGRGRNFPVQQTGGGNYIHVPLSPRTLNAWVKLVEDKKFGAEVVPGFQALSEGCTPYDINQMLNCVGDHQAAMQIIREIINDEAADWDAQHPIPGPLPAGQLRDPRGSDIAGTTSTVEEQIQWMYRPQNPVPVGNIYRRWIQIGLQKCVRMYNPTNILDVKQGPKEPFQSYVDRFYKSLRAEQTDPAVKNWMTQTLLIQNANPDCKLVLKGLGMNPTLEEMLTACQGVGGPGQKARLMAEALKEALTPPPIPFAAAQQRKVIRCWNCGKEGHSARQCRAPRRQGCWKCGKTGHVMAKCPERQAGFLRDGSMGKEAPQLPRGPSSSGADTNSTPSRSSSGSIGKIYAAGERAEGAEGETIQRGDGRLTAPRAGKSTSQRGDRGLAAPQFSLWKRPVVTAYIEVQPVEVLLDTGADDSIVAGIQLGDNYVPKIVGGIGGFINTKEIKNIEIKVLNKRVRATIMTGDTPINIFGRNILTALGMSLNLPIAKIEPIKVTLKPGKDGPRLRQWPLTKEKIEALREICEKMEKEGQLEEAPPTNPYNTPTFAIKKKDKNKWRMLIDFRELNRVTQDFTEIQLGIPHPAGLAKKKRITVLDVGDAYFSIPLHEDFRQYTAFTLPSVNNAEPGKRYIYKVLPQGWKGSPAIFQHTMRQVLEPFRKANPDVILIQYMDDILIASDRTGLEHDKVVLQLKELLNGLGFSTPDEKFQKDPPLQWMGYELWPTKWKLQKLQLPQKEIWTVNDIQKLVGVLNWAAQIYPGIKTKHLCRLIKGKMTLTEEVQWTELAEAELEENKIILSQEQEGYYYQEEKELEATIQKNQDNQWTYKIHQEEKILKVGKYAKIKNTHTNGVRLLAQVVQKIGKEALVIWGRIPKFHLPVERETWEQWWDNYWQVTWIPEWDFVSTPPLVRLTFNLVGDPIPGAETFYTDGSCNRQSKEGKARYVTDRGRDKVRVLERTTNQQAELEAFAMTLTDSGPKVNIIVDSQYVMGIVVGQPTESESRIVNQIIEDMIKKEAVYVAWVPAHKGIGGNQEVDHLVSQGIRQVLFLERIEPAQEEHEKYHSNMKELTHKFGIPQLVARQIVNTCAQCQQKGEAIHGQVNAEIGVWQMDCTHLEGKIIIVAVHVASGFIEAEVIPQESGRQTALFLLKLASRWPITHLHTDNGSNFTSQEVKMVAWWIGIEQSFGVPYNPQSQGVVEAMNHHLKNQISRIREQANTIETIVLMAVHCMNFKRRGGIGDMTPAERLINMITTEQEIQFLQRKNSNFKNFQVYYREGRDQLWKGPGELLWKGDGAVIVKVGADIKVIPRRKAKIIRDYGGRQELDSSHLEGAREEDGEVA.

Glycine 2 carries the N-myristoyl glycine; by host lipid modification. Positions 7–31 (VLRGKKADELEKIRLRPSGKKKYRL) are interaction with Gp41. Residues 16–22 (LEKIRLR) carry the Nuclear export signal motif. The Nuclear localization signal signature appears at 26-32 (KKKYRLK). The segment at 108–146 (LGAETGTAEKMPSTSRPTAPPSGRGRNFPVQQTGGGNYI) is disordered. Positions 192–229 (NCVGDHQAAMQIIREIINDEAADWDAQHPIPGPLPAGQ) are interaction with human PPIA/CYPA and NUP153. Residues 280 to 366 (YNPTNILDVK…GGPGQKARLM (87 aa)) are dimerization/Multimerization of capsid protein p24. 2 consecutive CCHC-type zinc fingers follow at residues 390-407 (IRCW…QCRA) and 411-428 (QGCW…KCPE). The segment at 434-509 (LRDGSMGKEA…GKSTSQRGDR (76 aa)) is disordered. Low complexity predominate over residues 459–468 (STPSRSSSGS). The segment covering 477–492 (ERAEGAEGETIQRGDG) has biased composition (basic and acidic residues). The segment at 514 to 518 (PQFSL) is dimerization of protease. Residues 533 to 602 (VEVLLDTGAD…TPINIFGRNI (70 aa)) form the Peptidase A2 domain. The For protease activity; shared with dimeric partner role is filled by aspartate 538. 2 dimerization of protease regions span residues 562 to 568 (GIGGFIN) and 601 to 613 (NILT…LNLP). One can recognise a Reverse transcriptase domain in the interval 656 to 846 (EGQLEEAPPT…PPLQWMGYEL (191 aa)). 3 residues coordinate Mg(2+): aspartate 722, aspartate 797, and aspartate 798. Residues 839 to 847 (LQWMGYELW) are RT 'primer grip'. The Tryptophan repeat motif signature appears at 1009-1025 (WEQWWDNYWQVTWIPEW). One can recognise an RNase H type-1 domain in the interval 1045 to 1168 (IPGAETFYTD…VDHLVSQGIR (124 aa)). Mg(2+)-binding residues include aspartate 1054, glutamate 1089, aspartate 1109, and aspartate 1160. Residues 1174-1215 (ERIEPAQEEHEKYHSNMKELTHKFGIPQLVARQIVNTCAQCQ) form an Integrase-type zinc finger. The Zn(2+) site is built by histidine 1183, histidine 1187, cysteine 1211, and cysteine 1214. The Integrase catalytic domain maps to 1224–1375 (QVNAEIGVWQ…TPAERLINMI (152 aa)). Positions 1235, 1287, and 1323 each coordinate Mg(2+). A DNA-binding region (integrase-type) is located at residues 1394 to 1441 (FQVYYREGRDQLWKGPGELLWKGDGAVIVKVGADIKVIPRRKAKIIRD).

In terms of assembly, homotrimer; further assembles as hexamers of trimers. Interacts with gp41 (via C-terminus). Interacts with host CALM1; this interaction induces a conformational change in the Matrix protein, triggering exposure of the myristate group. Interacts with host AP3D1; this interaction allows the polyprotein trafficking to multivesicular bodies during virus assembly. Part of the pre-integration complex (PIC) which is composed of viral genome, matrix protein, Vpr and integrase. As to quaternary structure, homodimer; the homodimer further multimerizes as homohexamers or homopentamers. Interacts with human PPIA/CYPA. Interacts with human NUP153. Interacts with host PDZD8; this interaction stabilizes the capsid. Interacts with monkey TRIM5; this interaction destabilizes the capsid. Homodimer, whose active site consists of two apposed aspartic acid residues. In terms of assembly, heterodimer of p66 RT and p51 RT (RT p66/p51). Heterodimerization of RT is essential for DNA polymerase activity. The overall folding of the subdomains is similar in p66 RT and p51 RT but the spatial arrangements of the subdomains are dramatically different. As to quaternary structure, homotetramer; may further associate as a homohexadecamer. Part of the pre-integration complex (PIC) which is composed of viral genome, matrix protein, Vpr and integrase. Interacts with human SMARCB1/INI1 and human PSIP1/LEDGF isoform 1. Interacts with human KPNA3; this interaction might play a role in nuclear import of the pre-integration complex. Interacts with human NUP153; this interaction might play a role in nuclear import of the pre-integration complex. Mg(2+) is required as a cofactor. Specific enzymatic cleavages by the viral protease yield mature proteins. The protease is released by autocatalytic cleavage. The polyprotein is cleaved during and after budding, this process is termed maturation. Proteolytic cleavage of p66 RT removes the RNase H domain to yield the p51 RT subunit. Nucleocapsid protein p7 might be further cleaved after virus entry.

The protein localises to the host cell membrane. The protein resides in the host endosome. Its subcellular location is the host multivesicular body. It localises to the virion membrane. It is found in the host nucleus. The protein localises to the host cytoplasm. The protein resides in the virion. It carries out the reaction Endopeptidase for which the P1 residue is preferably hydrophobic.. The enzyme catalyses Endohydrolysis of RNA in RNA/DNA hybrids. Three different cleavage modes: 1. sequence-specific internal cleavage of RNA. Human immunodeficiency virus type 1 and Moloney murine leukemia virus enzymes prefer to cleave the RNA strand one nucleotide away from the RNA-DNA junction. 2. RNA 5'-end directed cleavage 13-19 nucleotides from the RNA end. 3. DNA 3'-end directed cleavage 15-20 nucleotides away from the primer terminus.. It catalyses the reaction 3'-end directed exonucleolytic cleavage of viral RNA-DNA hybrid.. The catalysed reaction is DNA(n) + a 2'-deoxyribonucleoside 5'-triphosphate = DNA(n+1) + diphosphate. With respect to regulation, protease: The viral protease is inhibited by many synthetic protease inhibitors (PIs), such as amprenavir, atazanavir, indinavir, loprinavir, nelfinavir, ritonavir and saquinavir. Use of protease inhibitors in tritherapy regimens permit more ambitious therapeutic strategies. Reverse transcriptase/ribonuclease H: RT can be inhibited either by nucleoside RT inhibitors (NRTIs) or by non nucleoside RT inhibitors (NNRTIs). NRTIs act as chain terminators, whereas NNRTIs inhibit DNA polymerization by binding a small hydrophobic pocket near the RT active site and inducing an allosteric change in this region. Classical NRTIs are abacavir, adefovir (PMEA), didanosine (ddI), lamivudine (3TC), stavudine (d4T), tenofovir (PMPA), zalcitabine (ddC), and zidovudine (AZT). Classical NNRTIs are atevirdine (BHAP U-87201E), delavirdine, efavirenz (DMP-266), emivirine (I-EBU), and nevirapine (BI-RG-587). The tritherapies used as a basic effective treatment of AIDS associate two NRTIs and one NNRTI. Its function is as follows. Mediates, with Gag polyprotein, the essential events in virion assembly, including binding the plasma membrane, making the protein-protein interactions necessary to create spherical particles, recruiting the viral Env proteins, and packaging the genomic RNA via direct interactions with the RNA packaging sequence (Psi). Gag-Pol polyprotein may regulate its own translation, by the binding genomic RNA in the 5'-UTR. At low concentration, the polyprotein would promote translation, whereas at high concentration, the polyprotein would encapsidate genomic RNA and then shut off translation. Functionally, targets the polyprotein to the plasma membrane via a multipartite membrane-binding signal, that includes its myristoylated N-terminus. Matrix protein is part of the pre-integration complex. Implicated in the release from host cell mediated by Vpu. Binds to RNA. Forms the conical core that encapsulates the genomic RNA-nucleocapsid complex in the virion. Most core are conical, with only 7% tubular. The core is constituted by capsid protein hexamer subunits. The core is disassembled soon after virion entry. Host restriction factors such as TRIM5-alpha or TRIMCyp bind retroviral capsids and cause premature capsid disassembly, leading to blocks in reverse transcription. Capsid restriction by TRIM5 is one of the factors which restricts HIV-1 to the human species. Host PIN1 apparently facilitates the virion uncoating. On the other hand, interactions with PDZD8 or CYPA stabilize the capsid. In terms of biological role, encapsulates and protects viral dimeric unspliced genomic RNA (gRNA). Binds these RNAs through its zinc fingers. Acts as a nucleic acid chaperone which is involved in rearangement of nucleic acid secondary structure during gRNA retrotranscription. Also facilitates template switch leading to recombination. As part of the polyprotein, participates in gRNA dimerization, packaging, tRNA incorporation and virion assembly. Its function is as follows. Aspartyl protease that mediates proteolytic cleavages of Gag and Gag-Pol polyproteins during or shortly after the release of the virion from the plasma membrane. Cleavages take place as an ordered, step-wise cascade to yield mature proteins. This process is called maturation. Displays maximal activity during the budding process just prior to particle release from the cell. Also cleaves Nef and Vif, probably concomitantly with viral structural proteins on maturation of virus particles. Hydrolyzes host EIF4GI and PABP1 in order to shut off the capped cellular mRNA translation. The resulting inhibition of cellular protein synthesis serves to ensure maximal viral gene expression and to evade host immune response. Functionally, multifunctional enzyme that converts the viral RNA genome into dsDNA in the cytoplasm, shortly after virus entry into the cell. This enzyme displays a DNA polymerase activity that can copy either DNA or RNA templates, and a ribonuclease H (RNase H) activity that cleaves the RNA strand of RNA-DNA heteroduplexes in a partially processive 3' to 5' endonucleasic mode. Conversion of viral genomic RNA into dsDNA requires many steps. A tRNA(3)-Lys binds to the primer-binding site (PBS) situated at the 5'-end of the viral RNA. RT uses the 3' end of the tRNA primer to perform a short round of RNA-dependent minus-strand DNA synthesis. The reading proceeds through the U5 region and ends after the repeated (R) region which is present at both ends of viral RNA. The portion of the RNA-DNA heteroduplex is digested by the RNase H, resulting in a ssDNA product attached to the tRNA primer. This ssDNA/tRNA hybridizes with the identical R region situated at the 3' end of viral RNA. This template exchange, known as minus-strand DNA strong stop transfer, can be either intra- or intermolecular. RT uses the 3' end of this newly synthesized short ssDNA to perform the RNA-dependent minus-strand DNA synthesis of the whole template. RNase H digests the RNA template except for two polypurine tracts (PPTs) situated at the 5'-end and near the center of the genome. It is not clear if both polymerase and RNase H activities are simultaneous. RNase H probably can proceed both in a polymerase-dependent (RNA cut into small fragments by the same RT performing DNA synthesis) and a polymerase-independent mode (cleavage of remaining RNA fragments by free RTs). Secondly, RT performs DNA-directed plus-strand DNA synthesis using the PPTs that have not been removed by RNase H as primers. PPTs and tRNA primers are then removed by RNase H. The 3' and 5' ssDNA PBS regions hybridize to form a circular dsDNA intermediate. Strand displacement synthesis by RT to the PBS and PPT ends produces a blunt ended, linear dsDNA copy of the viral genome that includes long terminal repeats (LTRs) at both ends. Catalyzes viral DNA integration into the host chromosome, by performing a series of DNA cutting and joining reactions. This enzyme activity takes place after virion entry into a cell and reverse transcription of the RNA genome in dsDNA. The first step in the integration process is 3' processing. This step requires a complex comprising the viral genome, matrix protein, Vpr and integrase. This complex is called the pre-integration complex (PIC). The integrase protein removes 2 nucleotides from each 3' end of the viral DNA, leaving recessed CA OH's at the 3' ends. In the second step, the PIC enters cell nucleus. This process is mediated through integrase and Vpr proteins, and allows the virus to infect a non dividing cell. This ability to enter the nucleus is specific of lentiviruses, other retroviruses cannot and rely on cell division to access cell chromosomes. In the third step, termed strand transfer, the integrase protein joins the previously processed 3' ends to the 5' ends of strands of target cellular DNA at the site of integration. The 5'-ends are produced by integrase-catalyzed staggered cuts, 5 bp apart. A Y-shaped, gapped, recombination intermediate results, with the 5'-ends of the viral DNA strands and the 3' ends of target DNA strands remaining unjoined, flanking a gap of 5 bp. The last step is viral DNA integration into host chromosome. This involves host DNA repair synthesis in which the 5 bp gaps between the unjoined strands are filled in and then ligated. Since this process occurs at both cuts flanking the HIV genome, a 5 bp duplication of host DNA is produced at the ends of HIV-1 integration. Alternatively, Integrase may catalyze the excision of viral DNA just after strand transfer, this is termed disintegration. This is Gag-Pol polyprotein (gag-pol) from Homo sapiens (Human).